The primary structure comprises 79 residues: DNA-directed RNA polymerase subunit omega (79 aa).

It belongs to the RNA polymerase subunit omega family. In terms of assembly, the RNAP catalytic core consists of 2 alpha, 1 beta, 1 beta' and 1 omega subunit. When a sigma factor is associated with the core the holoenzyme is formed, which can initiate transcription.

It catalyses the reaction RNA(n) + a ribonucleoside 5'-triphosphate = RNA(n+1) + diphosphate. In terms of biological role, promotes RNA polymerase assembly. Latches the N- and C-terminal regions of the beta' subunit thereby facilitating its interaction with the beta and alpha subunits. This is DNA-directed RNA polymerase subunit omega from Kosmotoga olearia (strain ATCC BAA-1733 / DSM 21960 / TBF 19.5.1).